The sequence spans 211 residues: Thiamine-phosphate synthase (211 aa).

4-amino-2-methyl-5-(diphosphooxymethyl)pyrimidine is bound by residues 37 to 41 (QLRIK) and Asn69. The Mg(2+) site is built by Asp70 and Asp89. Ser108 is a binding site for 4-amino-2-methyl-5-(diphosphooxymethyl)pyrimidine. 134 to 136 (TQT) provides a ligand contact to 2-[(2R,5Z)-2-carboxy-4-methylthiazol-5(2H)-ylidene]ethyl phosphate. Lys137 contacts 4-amino-2-methyl-5-(diphosphooxymethyl)pyrimidine. 2-[(2R,5Z)-2-carboxy-4-methylthiazol-5(2H)-ylidene]ethyl phosphate-binding positions include Gly166 and 186-187 (VS).

Belongs to the thiamine-phosphate synthase family. The cofactor is Mg(2+).

It catalyses the reaction 2-[(2R,5Z)-2-carboxy-4-methylthiazol-5(2H)-ylidene]ethyl phosphate + 4-amino-2-methyl-5-(diphosphooxymethyl)pyrimidine + 2 H(+) = thiamine phosphate + CO2 + diphosphate. The catalysed reaction is 2-(2-carboxy-4-methylthiazol-5-yl)ethyl phosphate + 4-amino-2-methyl-5-(diphosphooxymethyl)pyrimidine + 2 H(+) = thiamine phosphate + CO2 + diphosphate. The enzyme catalyses 4-methyl-5-(2-phosphooxyethyl)-thiazole + 4-amino-2-methyl-5-(diphosphooxymethyl)pyrimidine + H(+) = thiamine phosphate + diphosphate. Its pathway is cofactor biosynthesis; thiamine diphosphate biosynthesis; thiamine phosphate from 4-amino-2-methyl-5-diphosphomethylpyrimidine and 4-methyl-5-(2-phosphoethyl)-thiazole: step 1/1. Its function is as follows. Condenses 4-methyl-5-(beta-hydroxyethyl)thiazole monophosphate (THZ-P) and 2-methyl-4-amino-5-hydroxymethyl pyrimidine pyrophosphate (HMP-PP) to form thiamine monophosphate (TMP). This chain is Thiamine-phosphate synthase, found in Salmonella schwarzengrund (strain CVM19633).